A 139-amino-acid polypeptide reads, in one-letter code: Putative pre-16S rRNA nuclease (139 aa).

It belongs to the YqgF nuclease family.

Its subcellular location is the cytoplasm. Could be a nuclease involved in processing of the 5'-end of pre-16S rRNA. This chain is Putative pre-16S rRNA nuclease, found in Pectobacterium carotovorum subsp. carotovorum (strain PC1).